Consider the following 614-residue polypeptide: Phosphomethylpyrimidine synthase (614 aa).

The span at 1–16 (MNAQLSALQQQAQQLS) shows a compositional bias: low complexity. Residues 1-36 (MNAQLSALQQQAQQLSESVTRPIPGSRKIHVPGSRP) form a disordered region. Residues Asn-230, Met-259, Tyr-288, His-324, 344 to 346 (SRG), 385 to 388 (DGLR), and Glu-424 each bind substrate. His-428 contributes to the Zn(2+) binding site. Tyr-451 is a substrate binding site. His-492 contributes to the Zn(2+) binding site. Positions 572, 575, and 580 each coordinate [4Fe-4S] cluster.

Belongs to the ThiC family. Homodimer. Requires [4Fe-4S] cluster as cofactor.

It catalyses the reaction 5-amino-1-(5-phospho-beta-D-ribosyl)imidazole + S-adenosyl-L-methionine = 4-amino-2-methyl-5-(phosphooxymethyl)pyrimidine + CO + 5'-deoxyadenosine + formate + L-methionine + 3 H(+). It functions in the pathway cofactor biosynthesis; thiamine diphosphate biosynthesis. Catalyzes the synthesis of the hydroxymethylpyrimidine phosphate (HMP-P) moiety of thiamine from aminoimidazole ribotide (AIR) in a radical S-adenosyl-L-methionine (SAM)-dependent reaction. In Stenotrophomonas maltophilia (strain R551-3), this protein is Phosphomethylpyrimidine synthase.